The sequence spans 436 residues: MLSYTSHCLQALLGVASLPYRQYQAYSSPQAPLQVPQVPQAGPPITTLVSSCAGFSYPEVACIDRYGSLLQGEFERKVRNVLGDADTYISTNAPSEPTFSDLQNADFLVWNQSAAKAILGPNPHVDFMFSIEDCSHEAPVYVPTTNELYFSRLQQGFLPQLVINLNNDPPTLEEKLAQPPIYAATGARFRDGLLYLATIGGNESLAGYTFRPGLYTLDPITGKTQALLNNYYGYYFNAVDDLDIDHEGQIWFTDNDYGRPCQVNTYAPQINAATYRFNPKTGLVTMVDDTLLEPNGLTFSPDNKTVYLTDTGAGSAIIDPNIYPAPHIAYNSTRKGRTIYAYDVAPSRKALLNKRPVYLSMEYAPDGIKTSREGYLVSATGKGVVVLTDEGEPLVRVQTNFTVINIAFAGAERDELWAIGKGGVARIRWGLKGSYA.

An N-terminal signal peptide occupies residues 1–27 (MLSYTSHCLQALLGVASLPYRQYQAYS).

This sequence belongs to the SMP-30/CGR1 family.

It participates in secondary metabolite biosynthesis. Lactonohydrolase; part of the gene cluster that mediates the biosynthesis of oryzines, natural products with an unusual maleidride backbone. The two subunits of the fungal fatty acid synthase oryfasA and oryfasB probably form octenoic acid. This fatty acid is most likely activated by the acyl-CoA ligase oryP to give octenyl-CoA before the citrate synthase-like protein oryE catalyzes condensation with oxaloacetate to form tricarboxylic acid. The next steps of the pathways are conjectural, but a favorite possible route has been proposed, beginning with decarboxylation and concomitant dehydration by the decarboxylase oryM, followed by tautomerization, which may lead to the production of a diene intermediate. Reduction of this diene intermediate could give the known metabolite piliformic acid. On the pathway to oryzine B and oryzine A, however, hydroxylation of the diene by the alpha-ketoglutarate-dependent dioxygenase oryG and lactonisation by the lactonohydrolases oryH or oryL could give oryzine B directly. Finally, enoyl reduction by the dehydrogenase oryD would then convert oryzine B into oryzine A. The polypeptide is Lactonohydrolase oryL (Aspergillus oryzae (strain ATCC 42149 / RIB 40) (Yellow koji mold)).